Consider the following 153-residue polypeptide: Inner membrane protein YjiG (153 aa).

At 1–31 (MTTQVRKNVMDMFIDGARRGFTIATTNLLPN) the chain is on the periplasmic side. Residues 32-52 (VVMAFVIIQALKITGLLDWVG) traverse the membrane as a helical segment. Topologically, residues 53–68 (HICEPVMALWGLPGEA) are cytoplasmic. 2 consecutive transmembrane segments (helical) span residues 69-89 (ATVL…AASL) and 90-110 (ATAG…MYLM). Over 111–132 (GNPVQNVGRCLGTAEVNAKYYP) the chain is Cytoplasmic. A helical transmembrane segment spans residues 133–153 (HIITVCVINALLSIWVMQLIV).

It belongs to the SpmB family.

It is found in the cell inner membrane. The chain is Inner membrane protein YjiG (yjiG) from Escherichia coli O157:H7.